The following is a 221-amino-acid chain: 7-cyano-7-deazaguanine synthase (221 aa).

12-22 (FSGGQDSTTCL) contributes to the ATP binding site. Residues cysteine 190, cysteine 199, cysteine 202, and cysteine 205 each contribute to the Zn(2+) site.

It belongs to the QueC family. Homodimer. It depends on Zn(2+) as a cofactor.

It carries out the reaction 7-carboxy-7-deazaguanine + NH4(+) + ATP = 7-cyano-7-deazaguanine + ADP + phosphate + H2O + H(+). It functions in the pathway purine metabolism; 7-cyano-7-deazaguanine biosynthesis. In terms of biological role, catalyzes the ATP-dependent conversion of 7-carboxy-7-deazaguanine (CDG) to 7-cyano-7-deazaguanine (preQ(0)). The chain is 7-cyano-7-deazaguanine synthase from Clostridium novyi (strain NT).